We begin with the raw amino-acid sequence, 454 residues long: Phosphoglucosamine mutase (454 aa).

S101 serves as the catalytic Phosphoserine intermediate. Mg(2+)-binding residues include S101, D243, D245, and D247. The residue at position 101 (S101) is a Phosphoserine.

Belongs to the phosphohexose mutase family. The cofactor is Mg(2+). Activated by phosphorylation.

The enzyme catalyses alpha-D-glucosamine 1-phosphate = D-glucosamine 6-phosphate. Its function is as follows. Catalyzes the conversion of glucosamine-6-phosphate to glucosamine-1-phosphate. The protein is Phosphoglucosamine mutase of Geobacter sp. (strain M21).